We begin with the raw amino-acid sequence, 503 residues long: Probable cytosol aminopeptidase (503 aa).

Mn(2+)-binding residues include Lys-270 and Asp-275. Residue Lys-282 is part of the active site. Mn(2+) is bound by residues Asp-293, Asp-352, and Glu-354. Arg-356 is an active-site residue.

Belongs to the peptidase M17 family. Requires Mn(2+) as cofactor.

It localises to the cytoplasm. It catalyses the reaction Release of an N-terminal amino acid, Xaa-|-Yaa-, in which Xaa is preferably Leu, but may be other amino acids including Pro although not Arg or Lys, and Yaa may be Pro. Amino acid amides and methyl esters are also readily hydrolyzed, but rates on arylamides are exceedingly low.. The catalysed reaction is Release of an N-terminal amino acid, preferentially leucine, but not glutamic or aspartic acids.. Functionally, presumably involved in the processing and regular turnover of intracellular proteins. Catalyzes the removal of unsubstituted N-terminal amino acids from various peptides. The polypeptide is Probable cytosol aminopeptidase (Sodalis glossinidius (strain morsitans)).